Consider the following 87-residue polypeptide: Small ribosomal subunit protein bS20 (87 aa).

A disordered region spans residues 1 to 20; the sequence is MANHKSAEKRARQTIKKTER.

Belongs to the bacterial ribosomal protein bS20 family.

In terms of biological role, binds directly to 16S ribosomal RNA. This is Small ribosomal subunit protein bS20 from Campylobacter jejuni subsp. jejuni serotype O:2 (strain ATCC 700819 / NCTC 11168).